The sequence spans 440 residues: GTPase Der (440 aa).

EngA-type G domains are found at residues 3-168 and 177-353; these read PIIA…GKMD and LKLA…EEYT. GTP contacts are provided by residues 9 to 16, 56 to 60, 119 to 122, 183 to 190, 230 to 234, and 295 to 298; these read GRPNVGKS, DTGGL, NKID, GKPNAGKS, DTAGI, and NKWD. In terms of domain architecture, KH-like spans 354-438; it reads KRISTGLLNT…PIMISFENKS (85 aa).

Belongs to the TRAFAC class TrmE-Era-EngA-EngB-Septin-like GTPase superfamily. EngA (Der) GTPase family. Associates with the 50S ribosomal subunit.

GTPase that plays an essential role in the late steps of ribosome biogenesis. In Fusobacterium nucleatum subsp. nucleatum (strain ATCC 25586 / DSM 15643 / BCRC 10681 / CIP 101130 / JCM 8532 / KCTC 2640 / LMG 13131 / VPI 4355), this protein is GTPase Der.